The following is a 902-amino-acid chain: Mitochondrial aspartate-glutamate transporter AGC1 (902 aa).

Solcar repeat units follow at residues 528–614 (FDSL…MRNR), 622–710 (LSLF…LKKD), and 725–813 (LKTW…FKGF). Helical transmembrane passes span 534–554 (FSLGSIAGCIGATVVYPIDFI), 591–611 (GPQLIGVAPEKAIKLTVNDFM), 622–642 (LSLFPEIISGASAGACQVIFT), 681–702 (GLYNGVAACLMRDVPFSAIYFP), 731–751 (LTAGAIAGMPAAFLTTPFDVI), and 786–806 (FKGGGARVLRSSPQFGFTLAA).

Belongs to the mitochondrial carrier (TC 2.A.29) family.

It localises to the mitochondrion inner membrane. Its function is as follows. Calcium-dependent mitochondrial aspartate and glutamate carrier. Transport of glutamate in mitochondria is required for mitochondrial transamination reactions and ornithine synthesis. Plays also a role in malate-aspartate NADH shuttle, which is critical for growth on acetate and fatty acids. The protein is Mitochondrial aspartate-glutamate transporter AGC1 (AGC1) of Saccharomyces cerevisiae (strain ATCC 204508 / S288c) (Baker's yeast).